We begin with the raw amino-acid sequence, 385 residues long: Putative F-box protein At1g47765 (385 aa).

A compositionally biased stretch (basic residues) spans M1–Q19. The tract at residues M1–S24 is disordered. In terms of domain architecture, F-box spans S20 to R69.

This is Putative F-box protein At1g47765 from Arabidopsis thaliana (Mouse-ear cress).